A 190-amino-acid polypeptide reads, in one-letter code: uncharacterized protein (190 aa).

The chain crosses the membrane as a helical span at residues 1 to 21 (MLVMSITFSFVAVALLVYFYV). The span at 103–114 (REEVCARPEHRS) shows a compositional bias: basic and acidic residues. The disordered stretch occupies residues 103 to 130 (REEVCARPEHRSAPSRAGSSAAKPTPTK).

This sequence to B.burgdorferi BB0265.

It is found in the membrane. This is an uncharacterized protein from Treponema pallidum (strain Nichols).